Reading from the N-terminus, the 145-residue chain is MYPAHLLVLVAVCVSLLGAANIPPQPLNLIQFKNMIQCAGTRPWTAYVNYGCYCGKGGSGTPVDELDRCCYTHDNCYNEAEKIPGCNPNIKTYSYTCTEPNLTCTDTADTCARFLCDCDRTAAICFASAPYNSNNVMISSSTNCQ.

Residues 1–19 (MYPAHLLVLVAVCVSLLGA) form the signal peptide. A propeptide spanning residues 20-27 (ANIPPQPL) is cleaved from the precursor. Intrachain disulfides connect C38–C97, C52–C144, C54–C70, C69–C125, C76–C118, C86–C111, and C104–C116. The Ca(2+) site is built by Y53, G55, and G57. The active site involves H73. D74 contacts Ca(2+). Residue D119 is part of the active site.

It belongs to the phospholipase A2 family. Group I subfamily. D49 sub-subfamily. As to quaternary structure, monomer. Ca(2+) serves as cofactor. As to expression, expressed by the venom gland.

It is found in the secreted. The enzyme catalyses a 1,2-diacyl-sn-glycero-3-phosphocholine + H2O = a 1-acyl-sn-glycero-3-phosphocholine + a fatty acid + H(+). Its function is as follows. Snake venom phospholipase A2 (PLA2) that shows anticoagulant and neurotoxic activities. PLA2 catalyzes the calcium-dependent hydrolysis of the 2-acyl groups in 3-sn-phosphoglycerides. This chain is Basic phospholipase A2 KPA2, found in Bungarus caeruleus (Indian krait).